The chain runs to 326 residues: Protein phosphatase PTC7 homolog fig (326 aa).

The tract at residues 40-83 (VQGKSKPRSPHLTSPQCSPEHRPRRFRPPSASGRTAFSSAPRPK) is disordered. Residues 64–314 (RFRPPSASGR…DDITVVLASV (251 aa)) form the PPM-type phosphatase domain. 3 residues coordinate Mn(2+): Asp-91, Gly-92, and Asp-236.

Belongs to the PP2C family. Mg(2+) serves as cofactor. Requires Mn(2+) as cofactor.

It carries out the reaction O-phospho-L-seryl-[protein] + H2O = L-seryl-[protein] + phosphate. The catalysed reaction is O-phospho-L-threonyl-[protein] + H2O = L-threonyl-[protein] + phosphate. The sequence is that of Protein phosphatase PTC7 homolog fig from Drosophila persimilis (Fruit fly).